The primary structure comprises 170 residues: VIP peptides (170 aa).

Residues 1–20 (MDTRNKAQLLVLLTLLSVLF) form the signal peptide. Positions 21–79 (SQTSAWPLYRAPSALRLGDRIPFEGANEPDQVSLKEDIDMLQNALAENDTPYYDVSRNA) are excised as a propeptide. Serine 76 is subject to Phosphoserine. The residue at position 107 (methionine 107) is a Methionine amide. The residue at position 152 (asparagine 152) is an Asparagine amide. A propeptide spanning residues 156–170 (SSEGESPDFPEELEK) is cleaved from the precursor.

It belongs to the glucagon family.

The protein localises to the secreted. VIP is a neuropeptide involved in a diverse array of physiological processes through activating the PACAP subfamily of class B1 G protein-coupled receptors: VIP receptor 1 (VPR1) and VIP receptor 2 (VPR2). Abundantly expressed throughout the CNS and peripheral nervous systems where they primarily exert neuroprotective and immune modulatory roles. Also causes vasodilation, lowers arterial blood pressure, stimulates myocardial contractility, increases glycogenolysis and relaxes the smooth muscle of trachea, stomach and gall bladder. Its function is as follows. PHM-27 and PHV-42 are two bioactive forms from proteolysis of the same precursor protein, that cause vasodilation. PHM-27 is a potent agonist of the calcitonin receptor CALCR, with similar efficacy as calcitonin. In Homo sapiens (Human), this protein is VIP peptides.